The following is a 427-amino-acid chain: Adenylosuccinate synthetase (427 aa).

Residues 12-18 (GDEGKGK) and 40-42 (GHT) contribute to the GTP site. D13 acts as the Proton acceptor in catalysis. Mg(2+)-binding residues include D13 and G40. IMP-binding positions include 13-16 (DEGK), 38-41 (NAGH), T131, R145, Q226, T241, and R305. H41 functions as the Proton donor in the catalytic mechanism. 301–307 (ATTGRKR) is a binding site for substrate. GTP is bound by residues R307, 333-335 (KLD), and 415-417 (SVG).

The protein belongs to the adenylosuccinate synthetase family. In terms of assembly, homodimer. It depends on Mg(2+) as a cofactor.

It localises to the cytoplasm. It carries out the reaction IMP + L-aspartate + GTP = N(6)-(1,2-dicarboxyethyl)-AMP + GDP + phosphate + 2 H(+). Its pathway is purine metabolism; AMP biosynthesis via de novo pathway; AMP from IMP: step 1/2. Plays an important role in the de novo pathway of purine nucleotide biosynthesis. Catalyzes the first committed step in the biosynthesis of AMP from IMP. In Oleidesulfovibrio alaskensis (strain ATCC BAA-1058 / DSM 17464 / G20) (Desulfovibrio alaskensis), this protein is Adenylosuccinate synthetase.